A 185-amino-acid polypeptide reads, in one-letter code: Ribosome-recycling factor (185 aa).

It belongs to the RRF family.

It is found in the cytoplasm. Its function is as follows. Responsible for the release of ribosomes from messenger RNA at the termination of protein biosynthesis. May increase the efficiency of translation by recycling ribosomes from one round of translation to another. This Corynebacterium kroppenstedtii (strain DSM 44385 / JCM 11950 / CIP 105744 / CCUG 35717) protein is Ribosome-recycling factor.